The sequence spans 215 residues: UPF0502 protein Shew_1617 (215 aa).

This sequence belongs to the UPF0502 family.

In Shewanella loihica (strain ATCC BAA-1088 / PV-4), this protein is UPF0502 protein Shew_1617.